The chain runs to 258 residues: Regulatory protein RecX (258 aa).

Belongs to the RecX family.

It localises to the cytoplasm. Its function is as follows. Modulates RecA activity. This chain is Regulatory protein RecX, found in Streptococcus pneumoniae (strain JJA).